Here is a 632-residue protein sequence, read N- to C-terminus: U-box domain-containing protein 14 (632 aa).

One can recognise a U-box domain in the interval V247–E321. ARM repeat units lie at residues V377–I416, E418–V457, D459–I498, Q500–T539, and Q541–I580.

In terms of assembly, homodimer. Interacts with SNL1. Binds to SD11, SD16, SD17, SD18, SD113, SD129 and SD25. As to expression, expressed in flowers, green siliques, seeds and rosette leaves.

The catalysed reaction is S-ubiquitinyl-[E2 ubiquitin-conjugating enzyme]-L-cysteine + [acceptor protein]-L-lysine = [E2 ubiquitin-conjugating enzyme]-L-cysteine + N(6)-ubiquitinyl-[acceptor protein]-L-lysine.. The protein operates within protein modification; protein ubiquitination. Its function is as follows. Functions as an E3 ubiquitin ligase with specific E2 ubiquitin-conjugating enzymes. Undergoes auto-ubiquitination. This Arabidopsis thaliana (Mouse-ear cress) protein is U-box domain-containing protein 14 (PUB14).